The following is a 291-amino-acid chain: METEYSKRVYQGVRVKHTVKDLLAEKRLRQTNTPRFSTSSSSSQPAFVPMPGSHVLPGYYSMRRSFLQDSELCHTVKQYSSDTYSSALGSKAFSYDHASTYPAFIDSYYTPDSYGDYRGPTSYTTSGGSLFPPSSLPTLLPTLSGESSSHLLLRDPWDQPSEDSVNQTEVLCPEAAAPVADSPSLAGPDSGSSSPYRLTSGRSGSSIPSSSQPYTLQPLEDVPYTAPSYTSASSYSCPPYMSTPGDLAVVKMTAVTSEEASGGVVSLSDTTSWAKDDGTGSWLSYETRRAF.

The 23-residue stretch at 7–29 (KRVYQGVRVKHTVKDLLAEKRLR) folds into the OCA domain. Positions 176-219 (AAPVADSPSLAGPDSGSSSPYRLTSGRSGSSIPSSSQPYTLQPL) are disordered. Over residues 200–211 (SGRSGSSIPSSS) the composition is skewed to low complexity.

The protein belongs to the POU2AF family.

Transcriptional coactivator that may regulate cell type-specific differentiation pathways. The protein is POU class 2 homeobox associating-factor 2 (pou2af2) of Danio rerio (Zebrafish).